The following is a 381-amino-acid chain: RxLR effector protein 54 (381 aa).

Residues 1–19 (MRFQSIMMLTITCAGTCLA) form the signal peptide. A RxLR-dEER motif is present at residues 57–75 (RFLRFDTVARDTAGNDEER). WY-domain stretches follow at residues 97–150 (SAEE…ANNG), 151–198 (NQAF…SLSG), 199–247 (NWIR…WNKN), 251–299 (FFGD…LLTS), and 302–354 (SHKT…RDKI). The ATG8 interacting motif signature appears at 372-381 (KPLDFDWEIV).

The protein belongs to the RxLR effector family. Interacts via its C-terminal AIM with host ATG8CL.

The protein localises to the secreted. Its subcellular location is the host nucleus. It is found in the host cytoplasm. Functionally, effector that specifically binds host autophagy protein ATG8CL of the ATG8 family to stimulate autophagosome formation and subsequent autophagy rather than blocking autophagic flux. The pathogen remodels host-microbe interface by co-opting the host autophagy machinery which plays a key role in plant immunity. PexRD54 competes with the autophagy cargo receptor Joka2 to deplete it out of ATG8CL complexes and interferes with Joka2's positive effect on pathogen defense. In Phytophthora infestans (strain T30-4) (Potato late blight agent), this protein is RxLR effector protein 54.